Reading from the N-terminus, the 486-residue chain is Ribulose bisphosphate carboxylase large chain (486 aa).

Positions 125 and 175 each coordinate substrate. K177 (proton acceptor) is an active-site residue. K179 lines the substrate pocket. Mg(2+)-binding residues include K203, D205, and E206. At K203 the chain carries N6-carboxylysine. H295 acts as the Proton acceptor in catalysis. The substrate site is built by R296, H328, and S380.

The protein belongs to the RuBisCO large chain family. Type I subfamily. Heterohexadecamer of 8 large chains and 8 small chains. Requires Mg(2+) as cofactor.

The catalysed reaction is 2 (2R)-3-phosphoglycerate + 2 H(+) = D-ribulose 1,5-bisphosphate + CO2 + H2O. The enzyme catalyses D-ribulose 1,5-bisphosphate + O2 = 2-phosphoglycolate + (2R)-3-phosphoglycerate + 2 H(+). Its function is as follows. RuBisCO catalyzes two reactions: the carboxylation of D-ribulose 1,5-bisphosphate, the primary event in carbon dioxide fixation, as well as the oxidative fragmentation of the pentose substrate. Both reactions occur simultaneously and in competition at the same active site. In Aurantimonas manganoxydans (strain ATCC BAA-1229 / DSM 21871 / SI85-9A1), this protein is Ribulose bisphosphate carboxylase large chain.